The primary structure comprises 518 residues: Phenylacetate 2-hydroxylase (518 aa).

Residue Cys-437 participates in heme binding.

The protein belongs to the cytochrome P450 family.

The enzyme catalyses 2-phenylacetate + reduced [NADPH--hemoprotein reductase] + O2 = (2-hydroxyphenyl)acetate + oxidized [NADPH--hemoprotein reductase] + H2O + H(+). It functions in the pathway aromatic compound metabolism; phenylacetate degradation. Functionally, catalyzes the hydroxylation of phenylacetate to 2-hydroxyphenylacetate in the homogentisate pathway. The homogentisate pathway is used to catabolize phenylacetate and use it as a carbon source. Can also catalyze the hydroxylation of 3-hydroxyphenylacetate to 2,5-dihydroxyphenylacetate (homogentisate) at low efficiency. This is Phenylacetate 2-hydroxylase (phacA) from Emericella nidulans (Aspergillus nidulans).